A 314-amino-acid polypeptide reads, in one-letter code: Porphobilinogen deaminase (314 aa).

An S-(dipyrrolylmethanemethyl)cysteine modification is found at Cys-242.

This sequence belongs to the HMBS family. In terms of assembly, monomer. It depends on dipyrromethane as a cofactor.

It carries out the reaction 4 porphobilinogen + H2O = hydroxymethylbilane + 4 NH4(+). Its pathway is porphyrin-containing compound metabolism; protoporphyrin-IX biosynthesis; coproporphyrinogen-III from 5-aminolevulinate: step 2/4. In terms of biological role, tetrapolymerization of the monopyrrole PBG into the hydroxymethylbilane pre-uroporphyrinogen in several discrete steps. The polypeptide is Porphobilinogen deaminase (hemC) (Buchnera aphidicola subsp. Acyrthosiphon pisum (strain APS) (Acyrthosiphon pisum symbiotic bacterium)).